The following is a 415-amino-acid chain: Glutamyl-tRNA reductase (415 aa).

Substrate contacts are provided by residues 49 to 52 (TCNR), S106, 111 to 113 (EPQ), and Q117. C50 acts as the Nucleophile in catalysis. Residue 186-191 (GAGETI) coordinates NADP(+).

This sequence belongs to the glutamyl-tRNA reductase family. Homodimer.

It carries out the reaction (S)-4-amino-5-oxopentanoate + tRNA(Glu) + NADP(+) = L-glutamyl-tRNA(Glu) + NADPH + H(+). Its pathway is porphyrin-containing compound metabolism; protoporphyrin-IX biosynthesis; 5-aminolevulinate from L-glutamyl-tRNA(Glu): step 1/2. Functionally, catalyzes the NADPH-dependent reduction of glutamyl-tRNA(Glu) to glutamate 1-semialdehyde (GSA). The chain is Glutamyl-tRNA reductase from Teredinibacter turnerae (strain ATCC 39867 / T7901).